The chain runs to 162 residues: 2-C-methyl-D-erythritol 2,4-cyclodiphosphate synthase (162 aa).

A divalent metal cation is bound by residues aspartate 8 and histidine 10. 4-CDP-2-C-methyl-D-erythritol 2-phosphate-binding positions include 8-10 (DVH) and 34-35 (HS). Histidine 42 is a binding site for a divalent metal cation. 4-CDP-2-C-methyl-D-erythritol 2-phosphate contacts are provided by residues 56–58 (DIG), 61–65 (FPDND), 132–135 (TTTE), phenylalanine 139, and lysine 142.

The protein belongs to the IspF family. As to quaternary structure, homotrimer. Requires a divalent metal cation as cofactor.

It carries out the reaction 4-CDP-2-C-methyl-D-erythritol 2-phosphate = 2-C-methyl-D-erythritol 2,4-cyclic diphosphate + CMP. It functions in the pathway isoprenoid biosynthesis; isopentenyl diphosphate biosynthesis via DXP pathway; isopentenyl diphosphate from 1-deoxy-D-xylulose 5-phosphate: step 4/6. Involved in the biosynthesis of isopentenyl diphosphate (IPP) and dimethylallyl diphosphate (DMAPP), two major building blocks of isoprenoid compounds. Catalyzes the conversion of 4-diphosphocytidyl-2-C-methyl-D-erythritol 2-phosphate (CDP-ME2P) to 2-C-methyl-D-erythritol 2,4-cyclodiphosphate (ME-CPP) with a corresponding release of cytidine 5-monophosphate (CMP). This is 2-C-methyl-D-erythritol 2,4-cyclodiphosphate synthase from Pelotomaculum thermopropionicum (strain DSM 13744 / JCM 10971 / SI).